The chain runs to 111 residues: Large ribosomal subunit protein uL22 (111 aa).

The protein belongs to the universal ribosomal protein uL22 family. In terms of assembly, part of the 50S ribosomal subunit.

Its function is as follows. This protein binds specifically to 23S rRNA; its binding is stimulated by other ribosomal proteins, e.g. L4, L17, and L20. It is important during the early stages of 50S assembly. It makes multiple contacts with different domains of the 23S rRNA in the assembled 50S subunit and ribosome. In terms of biological role, the globular domain of the protein is located near the polypeptide exit tunnel on the outside of the subunit, while an extended beta-hairpin is found that lines the wall of the exit tunnel in the center of the 70S ribosome. The protein is Large ribosomal subunit protein uL22 of Xylella fastidiosa (strain 9a5c).